We begin with the raw amino-acid sequence, 429 residues long: Phosphoribosylamine--glycine ligase (429 aa).

An ATP-grasp domain is found at 109-316 (KDFLARHNIP…LVELCQAAIA (208 aa)). 135 to 196 (VREKGAPIVV…EEFLDGEEAS (62 aa)) is an ATP binding site. Mg(2+) is bound by residues Glu286 and Asn288.

It belongs to the GARS family. It depends on Mg(2+) as a cofactor. Mn(2+) serves as cofactor.

It catalyses the reaction 5-phospho-beta-D-ribosylamine + glycine + ATP = N(1)-(5-phospho-beta-D-ribosyl)glycinamide + ADP + phosphate + H(+). It functions in the pathway purine metabolism; IMP biosynthesis via de novo pathway; N(1)-(5-phospho-D-ribosyl)glycinamide from 5-phospho-alpha-D-ribose 1-diphosphate: step 2/2. In Vibrio cholerae serotype O1 (strain ATCC 39315 / El Tor Inaba N16961), this protein is Phosphoribosylamine--glycine ligase.